A 311-amino-acid chain; its full sequence is UDP-N-acetylenolpyruvoylglucosamine reductase (311 aa).

The FAD-binding PCMH-type domain occupies 28 to 197; that stretch reads KIGGNARWLV…VSARFHLARG (170 aa). R177 is an active-site residue. The active-site Proton donor is S226. E296 is an active-site residue.

The protein belongs to the MurB family. FAD serves as cofactor.

The protein resides in the cytoplasm. It carries out the reaction UDP-N-acetyl-alpha-D-muramate + NADP(+) = UDP-N-acetyl-3-O-(1-carboxyvinyl)-alpha-D-glucosamine + NADPH + H(+). The protein operates within cell wall biogenesis; peptidoglycan biosynthesis. Functionally, cell wall formation. The chain is UDP-N-acetylenolpyruvoylglucosamine reductase from Magnetococcus marinus (strain ATCC BAA-1437 / JCM 17883 / MC-1).